A 382-amino-acid polypeptide reads, in one-letter code: MNPANFQPPNPPFHWAPMLPPDPPRCGMFWNTKNITDQLKQLQDTLNLAKSMEKELEALKMIKDAKGSVENAVQDSGVEYLEARKMDLGQQEMLSVDAANSLMSTLRAQLEPFRFVVDENSPWEEKSAAVRLTCKMKKSIRNKLWKKRKRRCAAEMRAKEPERFEQADREADEWREKEMAKDMANRKVDEMKAIEKIKAKRERKRLEPELELALIVEEMQELRSLRIEKLKKQGHFLPEEDDKFFESVRAAVEQEENQAQSLINTETEEHVIASEENTTLTTSNKTNNDTDKDSNTNAASCERTMKAPDNGCDNISNLPVEVYHYYYGSNIDMGRLIEIRREWDAYLSAGGSRIPGHWVQPSPPANEIWASCLVNTPKRDLS.

Residues 31–63 (NTKNITDQLKQLQDTLNLAKSMEKELEALKMIK) are a coiled coil. The tract at residues 274–297 (SEENTTLTTSNKTNNDTDKDSNTN) is disordered. Low complexity predominate over residues 277-287 (NTTLTTSNKTN).

In terms of assembly, component of the U11/U12 snRNPs that are part of the U12-type spliceosome.

It localises to the nucleus. The sequence is that of U11/U12 small nuclear ribonucleoprotein 59 kDa protein (SNRNP59) from Arabidopsis thaliana (Mouse-ear cress).